The primary structure comprises 345 residues: Dihydroorotase (345 aa).

2 residues coordinate Zn(2+): His13 and His15. Substrate contacts are provided by residues 15–17 (HFR) and Asn41. 3 residues coordinate Zn(2+): Lys98, His135, and His173. Lys98 bears the N6-carboxylysine mark. Position 135 (His135) interacts with substrate. Substrate is bound at residue Leu218. Asp246 contacts Zn(2+). Residue Asp246 is part of the active site. Positions 250 and 262 each coordinate substrate.

This sequence belongs to the metallo-dependent hydrolases superfamily. DHOase family. Class II DHOase subfamily. In terms of assembly, homodimer. It depends on Zn(2+) as a cofactor.

The catalysed reaction is (S)-dihydroorotate + H2O = N-carbamoyl-L-aspartate + H(+). The protein operates within pyrimidine metabolism; UMP biosynthesis via de novo pathway; (S)-dihydroorotate from bicarbonate: step 3/3. In terms of biological role, catalyzes the reversible cyclization of carbamoyl aspartate to dihydroorotate. This chain is Dihydroorotase, found in Shewanella halifaxensis (strain HAW-EB4).